A 611-amino-acid chain; its full sequence is Dihydroxy-acid dehydratase (611 aa).

Position 81 (aspartate 81) interacts with Mg(2+). A [2Fe-2S] cluster-binding site is contributed by cysteine 122. Mg(2+)-binding residues include aspartate 123 and lysine 124. Lysine 124 bears the N6-carboxylysine mark. Position 195 (cysteine 195) interacts with [2Fe-2S] cluster. Residue glutamate 491 participates in Mg(2+) binding. Serine 517 functions as the Proton acceptor in the catalytic mechanism.

Belongs to the IlvD/Edd family. In terms of assembly, homodimer. The cofactor is [2Fe-2S] cluster. Requires Mg(2+) as cofactor.

The catalysed reaction is (2R)-2,3-dihydroxy-3-methylbutanoate = 3-methyl-2-oxobutanoate + H2O. It carries out the reaction (2R,3R)-2,3-dihydroxy-3-methylpentanoate = (S)-3-methyl-2-oxopentanoate + H2O. The protein operates within amino-acid biosynthesis; L-isoleucine biosynthesis; L-isoleucine from 2-oxobutanoate: step 3/4. Its pathway is amino-acid biosynthesis; L-valine biosynthesis; L-valine from pyruvate: step 3/4. In terms of biological role, functions in the biosynthesis of branched-chain amino acids. Catalyzes the dehydration of (2R,3R)-2,3-dihydroxy-3-methylpentanoate (2,3-dihydroxy-3-methylvalerate) into 2-oxo-3-methylpentanoate (2-oxo-3-methylvalerate) and of (2R)-2,3-dihydroxy-3-methylbutanoate (2,3-dihydroxyisovalerate) into 2-oxo-3-methylbutanoate (2-oxoisovalerate), the penultimate precursor to L-isoleucine and L-valine, respectively. The polypeptide is Dihydroxy-acid dehydratase (Brucella suis (strain ATCC 23445 / NCTC 10510)).